The primary structure comprises 229 residues: Response regulator SaeR (229 aa).

The 114-residue stretch at 3–116 folds into the Response regulatory domain; sequence HLLIVDDEKD…ELVLRTNNLL (114 aa). 4-aspartylphosphate is present on aspartate 51. The ompR/PhoB-type DNA-binding region spans 128–227; it reads IEQLEFDGLV…VWGLGYKFER (100 aa).

Phosphorylated by SaeS.

Its subcellular location is the cytoplasm. Functionally, member of the two-component regulatory system SaeR/SaeS. Probably functions as a transcriptional regulator via a specific DNA-binding domain, recognizing motifs near the promoter sequences of target genes. This Staphylococcus epidermidis (strain ATCC 35984 / DSM 28319 / BCRC 17069 / CCUG 31568 / BM 3577 / RP62A) protein is Response regulator SaeR (saeR).